Consider the following 524-residue polypeptide: RNA-splicing ligase RtcB homolog 2 (524 aa).

Residues Asp-141, Cys-144, His-249, His-281, and His-372 each coordinate Mn(2+). 248 to 252 (NHYLE) lines the GMP pocket. GMP-binding positions include 372–373 (HN), 421–424 (GGSM), Ser-428, 447–450 (HGAG), and Lys-523. The active-site GMP-histidine intermediate is His-447.

This sequence belongs to the RtcB family. In terms of assembly, catalytic component of the tRNA-splicing ligase complex. Requires Mn(2+) as cofactor.

The enzyme catalyses a 3'-end 3'-phospho-ribonucleotide-RNA + a 5'-end dephospho-ribonucleoside-RNA + GTP = a ribonucleotidyl-ribonucleotide-RNA + GMP + diphosphate. It catalyses the reaction a 3'-end 2',3'-cyclophospho-ribonucleotide-RNA + a 5'-end dephospho-ribonucleoside-RNA + GTP + H2O = a ribonucleotidyl-ribonucleotide-RNA + GMP + diphosphate + H(+). Its function is as follows. Catalytic subunit of the tRNA-splicing ligase complex that acts by directly joining spliced tRNA halves to mature-sized tRNAs by incorporating the precursor-derived splice junction phosphate into the mature tRNA as a canonical 3',5'-phosphodiester. May act as an RNA ligase with broad substrate specificity, and may function toward other RNAs. The polypeptide is RNA-splicing ligase RtcB homolog 2 (Entamoeba dispar (strain ATCC PRA-260 / SAW760)).